The following is a 608-amino-acid chain: Glutamine--fructose-6-phosphate aminotransferase [isomerizing] (608 aa).

Residue Cys2 is the Nucleophile; for GATase activity of the active site. Positions Cys2–Glu217 constitute a Glutamine amidotransferase type-2 domain. SIS domains follow at residues Thr285–Thr424 and Lys453–Pro598. The active-site For Fru-6P isomerization activity is the Lys603.

Homodimer.

The protein localises to the cytoplasm. It catalyses the reaction D-fructose 6-phosphate + L-glutamine = D-glucosamine 6-phosphate + L-glutamate. Its function is as follows. Catalyzes the first step in hexosamine metabolism, converting fructose-6P into glucosamine-6P using glutamine as a nitrogen source. The sequence is that of Glutamine--fructose-6-phosphate aminotransferase [isomerizing] from Clostridium acetobutylicum (strain ATCC 824 / DSM 792 / JCM 1419 / IAM 19013 / LMG 5710 / NBRC 13948 / NRRL B-527 / VKM B-1787 / 2291 / W).